A 309-amino-acid chain; its full sequence is Beta-lactamase (309 aa).

The N-terminal stretch at M1–A28 is a signal peptide. S92 serves as the catalytic Acyl-ester intermediate. The active-site Proton acceptor is the E188. K254–G256 provides a ligand contact to substrate.

It belongs to the class-A beta-lactamase family.

It catalyses the reaction a beta-lactam + H2O = a substituted beta-amino acid. In terms of biological role, this protein is a beta-lactamase with a substrate specificity for penicillins. This is Beta-lactamase (bla) from Bacillus thuringiensis.